A 179-amino-acid chain; its full sequence is SCAN domain-containing protein 1 (179 aa).

A disordered region spans residues 1 to 108 (MAATEPILAA…GSRLGPETFR (108 aa)). Low complexity predominate over residues 60–80 (AIPTPQAAASAAPELPLGPAP). The 59-residue stretch at 108–166 (RQRFRQFRYQDAAGPREAFRQLRELSRQWLRPDIRTKEQIVEMLVQEQLLAILPEAARA) folds into the SCAN box domain.

As to quaternary structure, interacts with ZNF202.

The protein localises to the nucleus. Its function is as follows. May regulate transcriptional activity. This Pongo pygmaeus (Bornean orangutan) protein is SCAN domain-containing protein 1 (SCAND1).